We begin with the raw amino-acid sequence, 424 residues long: Imidazolonepropionase (424 aa).

2 residues coordinate Fe(3+): H84 and H86. H84 and H86 together coordinate Zn(2+). Residues R93, Y156, and H189 each contribute to the 4-imidazolone-5-propanoate site. Residue Y156 participates in N-formimidoyl-L-glutamate binding. H254 contributes to the Fe(3+) binding site. Position 254 (H254) interacts with Zn(2+). Position 257 (E257) interacts with 4-imidazolone-5-propanoate. D328 serves as a coordination point for Fe(3+). D328 serves as a coordination point for Zn(2+). Residues N330 and G332 each contribute to the N-formimidoyl-L-glutamate site. Residue S333 coordinates 4-imidazolone-5-propanoate.

Belongs to the metallo-dependent hydrolases superfamily. HutI family. The cofactor is Zn(2+). Requires Fe(3+) as cofactor.

Its subcellular location is the cytoplasm. It catalyses the reaction 4-imidazolone-5-propanoate + H2O = N-formimidoyl-L-glutamate. Its pathway is amino-acid degradation; L-histidine degradation into L-glutamate; N-formimidoyl-L-glutamate from L-histidine: step 3/3. Functionally, catalyzes the hydrolytic cleavage of the carbon-nitrogen bond in imidazolone-5-propanoate to yield N-formimidoyl-L-glutamate. It is the third step in the universal histidine degradation pathway. This Geobacillus sp. (strain WCH70) protein is Imidazolonepropionase.